We begin with the raw amino-acid sequence, 457 residues long: Oxygen-independent coproporphyrinogen III oxidase (457 aa).

The Radical SAM core domain maps to Leu-47 to Leu-279. Tyr-56 is a binding site for S-adenosyl-L-methionine. [4Fe-4S] cluster-binding residues include Cys-62 and Cys-66. Phe-68 is an S-adenosyl-L-methionine binding site. A [4Fe-4S] cluster-binding site is contributed by Cys-69. Residues Gly-113, Gly-114–Thr-115, Glu-147, Gln-174, Arg-186, Asp-211, Ala-245, and Ile-331 each bind S-adenosyl-L-methionine.

This sequence belongs to the anaerobic coproporphyrinogen-III oxidase family. In terms of assembly, monomer. Requires [4Fe-4S] cluster as cofactor.

The protein localises to the cytoplasm. The enzyme catalyses coproporphyrinogen III + 2 S-adenosyl-L-methionine = protoporphyrinogen IX + 2 5'-deoxyadenosine + 2 L-methionine + 2 CO2. It functions in the pathway porphyrin-containing compound metabolism; protoporphyrin-IX biosynthesis; protoporphyrinogen-IX from coproporphyrinogen-III (AdoMet route): step 1/1. Involved in the heme biosynthesis. Catalyzes the anaerobic oxidative decarboxylation of propionate groups of rings A and B of coproporphyrinogen III to yield the vinyl groups in protoporphyrinogen IX. The chain is Oxygen-independent coproporphyrinogen III oxidase (hemN) from Helicobacter pylori (strain J99 / ATCC 700824) (Campylobacter pylori J99).